The following is a 330-amino-acid chain: D-cysteine desulfhydrase (330 aa).

Residue Lys-52 is modified to N6-(pyridoxal phosphate)lysine.

The protein belongs to the ACC deaminase/D-cysteine desulfhydrase family. In terms of assembly, homodimer. Requires pyridoxal 5'-phosphate as cofactor.

The enzyme catalyses D-cysteine + H2O = hydrogen sulfide + pyruvate + NH4(+) + H(+). Functionally, catalyzes the alpha,beta-elimination reaction of D-cysteine and of several D-cysteine derivatives. It could be a defense mechanism against D-cysteine. This chain is D-cysteine desulfhydrase, found in Yersinia enterocolitica serotype O:8 / biotype 1B (strain NCTC 13174 / 8081).